The chain runs to 187 residues: dTTP/UTP pyrophosphatase (187 aa).

The active-site Proton acceptor is the D64.

It belongs to the Maf family. YhdE subfamily. Requires a divalent metal cation as cofactor.

The protein localises to the cytoplasm. The catalysed reaction is dTTP + H2O = dTMP + diphosphate + H(+). It carries out the reaction UTP + H2O = UMP + diphosphate + H(+). Its function is as follows. Nucleoside triphosphate pyrophosphatase that hydrolyzes dTTP and UTP. May have a dual role in cell division arrest and in preventing the incorporation of modified nucleotides into cellular nucleic acids. The protein is dTTP/UTP pyrophosphatase of Leptospira interrogans serogroup Icterohaemorrhagiae serovar Lai (strain 56601).